Here is a 179-residue protein sequence, read N- to C-terminus: 3-hydroxyanthranilate 3,4-dioxygenase (179 aa).

Position 47 (arginine 47) interacts with O2. Positions 51, 57, and 96 each coordinate Fe cation. Glutamate 57 lines the substrate pocket. Substrate-binding residues include arginine 100 and glutamate 110. Fe cation contacts are provided by cysteine 125, cysteine 128, cysteine 162, and cysteine 165.

This sequence belongs to the 3-HAO family. Requires Fe(2+) as cofactor.

The enzyme catalyses 3-hydroxyanthranilate + O2 = (2Z,4Z)-2-amino-3-carboxymuconate 6-semialdehyde. It participates in cofactor biosynthesis; NAD(+) biosynthesis; quinolinate from L-kynurenine: step 3/3. Functionally, catalyzes the oxidative ring opening of 3-hydroxyanthranilate to 2-amino-3-carboxymuconate semialdehyde, which spontaneously cyclizes to quinolinate. This Bacillus thuringiensis (strain Al Hakam) protein is 3-hydroxyanthranilate 3,4-dioxygenase.